The chain runs to 420 residues: Exodeoxyribonuclease 7 large subunit (420 aa).

Belongs to the XseA family. Heterooligomer composed of large and small subunits.

It localises to the cytoplasm. The enzyme catalyses Exonucleolytic cleavage in either 5'- to 3'- or 3'- to 5'-direction to yield nucleoside 5'-phosphates.. Functionally, bidirectionally degrades single-stranded DNA into large acid-insoluble oligonucleotides, which are then degraded further into small acid-soluble oligonucleotides. The protein is Exodeoxyribonuclease 7 large subunit of Helicobacter pylori (strain HPAG1).